The primary structure comprises 757 residues: Serine/threonine-protein phosphatase with EF-hands 2 (757 aa).

Residues 21-46 (KAAALIQRWYRRYMARLEMRRRCTWN) form the IQ domain. The interval 128–544 (ATALVEAFRL…PHIVQYQANK (417 aa)) is catalytic. Mn(2+)-binding residues include D179, H181, D208, and N240. The active-site Proton donor is H241. A Mn(2+)-binding site is contributed by H292. A disordered region spans residues 318 to 349 (CKTRKESENREEQKRKDNQTSSGQKPTPWFLP). Positions 321 to 335 (RKESENREEQKRKDN) are enriched in basic and acidic residues. H492 provides a ligand contact to Mn(2+). 3 consecutive EF-hand domains span residues 572–607 (AHSS…VLHL), 656–691 (RNRS…FSSH), and 696–731 (ITDD…VEQS). Residues D585, D587, S589, D596, D669, D671, S673, E680, D709, N711, D713, H715, and E720 each coordinate Ca(2+).

Belongs to the PPP phosphatase family. Mn(2+) is required as a cofactor. Detected in retina, more specifically in photoreceptors.

It carries out the reaction O-phospho-L-seryl-[protein] + H2O = L-seryl-[protein] + phosphate. The enzyme catalyses O-phospho-L-threonyl-[protein] + H2O = L-threonyl-[protein] + phosphate. Its activity is regulated as follows. Activated by calcium. Its function is as follows. May play a role in phototransduction. May dephosphorylate photoactivated rhodopsin. May function as a calcium sensing regulator of ionic currents, energy production or synaptic transmission. The chain is Serine/threonine-protein phosphatase with EF-hands 2 (Ppef2) from Mus musculus (Mouse).